The primary structure comprises 179 residues: Large ribosomal subunit protein uL5 (179 aa).

Belongs to the universal ribosomal protein uL5 family. Part of the 50S ribosomal subunit; part of the 5S rRNA/L5/L18/L25 subcomplex. Contacts the 5S rRNA and the P site tRNA. Forms a bridge to the 30S subunit in the 70S ribosome.

In terms of biological role, this is one of the proteins that bind and probably mediate the attachment of the 5S RNA into the large ribosomal subunit, where it forms part of the central protuberance. In the 70S ribosome it contacts protein S13 of the 30S subunit (bridge B1b), connecting the 2 subunits; this bridge is implicated in subunit movement. Contacts the P site tRNA; the 5S rRNA and some of its associated proteins might help stabilize positioning of ribosome-bound tRNAs. This is Large ribosomal subunit protein uL5 from Rhodospirillum rubrum (strain ATCC 11170 / ATH 1.1.1 / DSM 467 / LMG 4362 / NCIMB 8255 / S1).